The chain runs to 120 residues: Phosphoribosyl-AMP cyclohydrolase (120 aa).

Asp75 is a binding site for Mg(2+). Cys76 serves as a coordination point for Zn(2+). Positions 77 and 79 each coordinate Mg(2+). Zn(2+) contacts are provided by Cys92 and Cys99.

The protein belongs to the PRA-CH family. Homodimer. Mg(2+) serves as cofactor. The cofactor is Zn(2+).

It is found in the cytoplasm. The enzyme catalyses 1-(5-phospho-beta-D-ribosyl)-5'-AMP + H2O = 1-(5-phospho-beta-D-ribosyl)-5-[(5-phospho-beta-D-ribosylamino)methylideneamino]imidazole-4-carboxamide. The protein operates within amino-acid biosynthesis; L-histidine biosynthesis; L-histidine from 5-phospho-alpha-D-ribose 1-diphosphate: step 3/9. In terms of biological role, catalyzes the hydrolysis of the adenine ring of phosphoribosyl-AMP. This is Phosphoribosyl-AMP cyclohydrolase from Methanosarcina mazei (strain ATCC BAA-159 / DSM 3647 / Goe1 / Go1 / JCM 11833 / OCM 88) (Methanosarcina frisia).